Here is a 397-residue protein sequence, read N- to C-terminus: 2,3-bisphosphoglycerate-independent phosphoglycerate mutase (397 aa).

This sequence belongs to the BPG-independent phosphoglycerate mutase family. A-PGAM subfamily.

The catalysed reaction is (2R)-2-phosphoglycerate = (2R)-3-phosphoglycerate. The protein operates within carbohydrate degradation; glycolysis; pyruvate from D-glyceraldehyde 3-phosphate: step 3/5. Its function is as follows. Catalyzes the interconversion of 2-phosphoglycerate and 3-phosphoglycerate. This is 2,3-bisphosphoglycerate-independent phosphoglycerate mutase (apgM) from Methanosarcina mazei (strain ATCC BAA-159 / DSM 3647 / Goe1 / Go1 / JCM 11833 / OCM 88) (Methanosarcina frisia).